A 124-amino-acid polypeptide reads, in one-letter code: Small ribosomal subunit protein uS12 (124 aa).

Residues 9 to 28 (KSERTVQKNQTKSPALDSCP) are disordered. 3-methylthioaspartic acid is present on Asp-89.

This sequence belongs to the universal ribosomal protein uS12 family. As to quaternary structure, part of the 30S ribosomal subunit. Contacts proteins S8 and S17. May interact with IF1 in the 30S initiation complex.

Its function is as follows. With S4 and S5 plays an important role in translational accuracy. In terms of biological role, interacts with and stabilizes bases of the 16S rRNA that are involved in tRNA selection in the A site and with the mRNA backbone. Located at the interface of the 30S and 50S subunits, it traverses the body of the 30S subunit contacting proteins on the other side and probably holding the rRNA structure together. The combined cluster of proteins S8, S12 and S17 appears to hold together the shoulder and platform of the 30S subunit. This is Small ribosomal subunit protein uS12 from Bdellovibrio bacteriovorus (strain ATCC 15356 / DSM 50701 / NCIMB 9529 / HD100).